The following is a 338-amino-acid chain: MREKLEALLSAATAELAHVATEDSLQDLRVKYLGKKGELTAVMKGLGSLSSEERPLIGQIVNKVKTELETRIDAAALQIREAGKAEKLRSERVDVTLPGRRLPVGTRHPITLITEEISDIFAGLGFLVAEGPEIEHDFYNFEALNFPKDHPARDMQDTFFISDTLLLRTHTSPVQVRTMLKQPPPVRIIAPGTVYRCDSDATHSPMFHQIEGLMVDKGITFGDLKGILTNFINQLFGKDTGVRLRPSFFPFTEPSAEVDIACVICKGKGCRVCKNTGWLEILGAGMVDPEVYRHVNYDAEAYTGFAFGMGIERIAMLKYGISDMRLLFENDLRFLKQF.

Glu-253 serves as a coordination point for Mg(2+).

Belongs to the class-II aminoacyl-tRNA synthetase family. Phe-tRNA synthetase alpha subunit type 1 subfamily. In terms of assembly, tetramer of two alpha and two beta subunits. It depends on Mg(2+) as a cofactor.

It is found in the cytoplasm. It catalyses the reaction tRNA(Phe) + L-phenylalanine + ATP = L-phenylalanyl-tRNA(Phe) + AMP + diphosphate + H(+). This Geotalea daltonii (strain DSM 22248 / JCM 15807 / FRC-32) (Geobacter daltonii) protein is Phenylalanine--tRNA ligase alpha subunit.